A 319-amino-acid polypeptide reads, in one-letter code: Malate dehydrogenase (319 aa).

NAD(+)-binding positions include 11-16 (GAGNVG) and Asp36. Arg85 and Arg91 together coordinate substrate. NAD(+) is bound by residues Asn98 and 121–123 (VSN). Residues Asn123 and Arg154 each contribute to the substrate site. His178 serves as the catalytic Proton acceptor.

Belongs to the LDH/MDH superfamily. MDH type 3 family.

It catalyses the reaction (S)-malate + NAD(+) = oxaloacetate + NADH + H(+). In terms of biological role, catalyzes the reversible oxidation of malate to oxaloacetate. The polypeptide is Malate dehydrogenase (Sulfurimonas denitrificans (strain ATCC 33889 / DSM 1251) (Thiomicrospira denitrificans (strain ATCC 33889 / DSM 1251))).